The following is a 191-amino-acid chain: Glycerol-3-phosphate acyltransferase (191 aa).

5 consecutive transmembrane segments (helical) span residues 5–25 (IVFVLSYILGSIPFSLVITKI), 50–70 (CIAALALLLDSLKGFIAVYIA), 78–98 (SFHMYASAILVVLGHMFPVWL), 112–132 (ILIALNISLVLAFVFVWLAVF), and 153–173 (SFFFQRDLFFTLLTVAILIFF).

It belongs to the PlsY family. In terms of assembly, probably interacts with PlsX.

It localises to the cell membrane. The catalysed reaction is an acyl phosphate + sn-glycerol 3-phosphate = a 1-acyl-sn-glycero-3-phosphate + phosphate. The protein operates within lipid metabolism; phospholipid metabolism. Catalyzes the transfer of an acyl group from acyl-phosphate (acyl-PO(4)) to glycerol-3-phosphate (G3P) to form lysophosphatidic acid (LPA). This enzyme utilizes acyl-phosphate as fatty acyl donor, but not acyl-CoA or acyl-ACP. The chain is Glycerol-3-phosphate acyltransferase from Wolbachia sp. subsp. Brugia malayi (strain TRS).